Consider the following 159-residue polypeptide: Acetolactate synthase small subunit (159 aa).

The 75-residue stretch at 5 to 79 folds into the ACT domain; that stretch reads ILSILLENES…DVLKVTEIED (75 aa).

It belongs to the acetolactate synthase small subunit family. In terms of assembly, dimer of large and small chains.

It catalyses the reaction 2 pyruvate + H(+) = (2S)-2-acetolactate + CO2. Its pathway is amino-acid biosynthesis; L-isoleucine biosynthesis; L-isoleucine from 2-oxobutanoate: step 1/4. It functions in the pathway amino-acid biosynthesis; L-valine biosynthesis; L-valine from pyruvate: step 1/4. The chain is Acetolactate synthase small subunit (ilvH) from Buchnera aphidicola subsp. Baizongia pistaciae (strain Bp).